The following is a 125-amino-acid chain: Fluoride-specific ion channel FluC (125 aa).

Helical transmembrane passes span Leu-4 to Ile-24 and Tyr-34 to Leu-54. Na(+) is bound by residues Gly-74 and Thr-77. A helical membrane pass occupies residues Val-99–Val-119.

The protein belongs to the fluoride channel Fluc/FEX (TC 1.A.43) family.

Its subcellular location is the cell inner membrane. It carries out the reaction fluoride(in) = fluoride(out). Its activity is regulated as follows. Na(+) is not transported, but it plays an essential structural role and its presence is essential for fluoride channel function. Functionally, fluoride-specific ion channel. Important for reducing fluoride concentration in the cell, thus reducing its toxicity. The protein is Fluoride-specific ion channel FluC of Acidobacterium capsulatum (strain ATCC 51196 / DSM 11244 / BCRC 80197 / JCM 7670 / NBRC 15755 / NCIMB 13165 / 161).